Consider the following 95-residue polypeptide: Co-chaperonin GroES (95 aa).

It belongs to the GroES chaperonin family. In terms of assembly, heptamer of 7 subunits arranged in a ring. Interacts with the chaperonin GroEL.

Its subcellular location is the cytoplasm. Functionally, together with the chaperonin GroEL, plays an essential role in assisting protein folding. The GroEL-GroES system forms a nano-cage that allows encapsulation of the non-native substrate proteins and provides a physical environment optimized to promote and accelerate protein folding. GroES binds to the apical surface of the GroEL ring, thereby capping the opening of the GroEL channel. This Lachnoclostridium phytofermentans (strain ATCC 700394 / DSM 18823 / ISDg) (Clostridium phytofermentans) protein is Co-chaperonin GroES.